A 130-amino-acid polypeptide reads, in one-letter code: Small ribosomal subunit protein uS9 (130 aa).

The segment at arginine 109 to arginine 130 is disordered.

Belongs to the universal ribosomal protein uS9 family.

This chain is Small ribosomal subunit protein uS9, found in Desulfotalea psychrophila (strain LSv54 / DSM 12343).